The chain runs to 137 residues: MRHYEIVFMVHPDQSEQVAGMIERYTGSITEAGGTIHRLEDWGRRQMAYPINKLHKAHYVLMNVEAGQEVMDELETAFRFNDAVLRNMIMRTKGAVTEQSIMLKQKEERAERAPRRDDREERAPRREEEAKPEAAAE.

The interval 96 to 137 (VTEQSIMLKQKEERAERAPRRDDREERAPRREEEAKPEAAAE) is disordered. The span at 104 to 137 (KQKEERAERAPRRDDREERAPRREEEAKPEAAAE) shows a compositional bias: basic and acidic residues.

It belongs to the bacterial ribosomal protein bS6 family.

In terms of biological role, binds together with bS18 to 16S ribosomal RNA. The protein is Small ribosomal subunit protein bS6 of Vibrio atlanticus (strain LGP32) (Vibrio splendidus (strain Mel32)).